Consider the following 146-residue polypeptide: Hemoglobin subunit beta (146 aa).

N-acetylvaline is present on Val1. The Globin domain maps to 2-146; the sequence is HLTAEEKAAV…VATALAHKYH (145 aa). Thr12 is subject to Phosphothreonine. The residue at position 44 (Ser44) is a Phosphoserine. Lys59 carries the post-translational modification N6-acetyllysine. A heme b-binding site is contributed by His63. Lys82 carries the N6-acetyllysine modification. His92 provides a ligand contact to heme b. Cys93 carries the post-translational modification S-nitrosocysteine. Lys144 carries the post-translational modification N6-acetyllysine.

The protein belongs to the globin family. As to quaternary structure, heterotetramer of two alpha chains and two beta chains. In terms of tissue distribution, red blood cells.

In terms of biological role, involved in oxygen transport from the lung to the various peripheral tissues. This is Hemoglobin subunit beta (HBB) from Mustela lutreola (European mink).